A 330-amino-acid chain; its full sequence is Glycine betaine/proline betaine-binding periplasmic protein (330 aa).

The first 21 residues, 1–21 (MRHSVLFATAFATLISTQTFA), serve as a signal peptide directing secretion. Substrate is bound by residues Trp-86, His-90, and 161–163 (WGC). Cys-157 and Cys-163 are disulfide-bonded.

The complex is composed of two ATP-binding proteins (ProV), two transmembrane proteins (ProW) and a solute-binding protein (ProX).

Its subcellular location is the periplasm. Functionally, part of the ProU ABC transporter complex involved in glycine betaine and proline betaine uptake. Binds glycine betaine and proline betaine with high affinity. The sequence is that of Glycine betaine/proline betaine-binding periplasmic protein from Escherichia coli (strain K12).